The chain runs to 469 residues: Aspartyl/glutamyl-tRNA(Asn/Gln) amidotransferase subunit B (469 aa).

It belongs to the GatB/GatE family. GatB subfamily. As to quaternary structure, heterotrimer of A, B and C subunits.

The enzyme catalyses L-glutamyl-tRNA(Gln) + L-glutamine + ATP + H2O = L-glutaminyl-tRNA(Gln) + L-glutamate + ADP + phosphate + H(+). The catalysed reaction is L-aspartyl-tRNA(Asn) + L-glutamine + ATP + H2O = L-asparaginyl-tRNA(Asn) + L-glutamate + ADP + phosphate + 2 H(+). Functionally, allows the formation of correctly charged Asn-tRNA(Asn) or Gln-tRNA(Gln) through the transamidation of misacylated Asp-tRNA(Asn) or Glu-tRNA(Gln) in organisms which lack either or both of asparaginyl-tRNA or glutaminyl-tRNA synthetases. The reaction takes place in the presence of glutamine and ATP through an activated phospho-Asp-tRNA(Asn) or phospho-Glu-tRNA(Gln). In Methanococcus maripaludis (strain DSM 14266 / JCM 13030 / NBRC 101832 / S2 / LL), this protein is Aspartyl/glutamyl-tRNA(Asn/Gln) amidotransferase subunit B.